The primary structure comprises 602 residues: Elongation factor 4 (602 aa).

The 183-residue stretch at 8 to 190 (DLIRNFSIVA…AIVHRLPPPK (183 aa)) folds into the tr-type G domain. Residues 20-25 (DHGKST) and 137-140 (NKID) each bind GTP.

The protein belongs to the TRAFAC class translation factor GTPase superfamily. Classic translation factor GTPase family. LepA subfamily.

Its subcellular location is the cell inner membrane. The catalysed reaction is GTP + H2O = GDP + phosphate + H(+). Functionally, required for accurate and efficient protein synthesis under certain stress conditions. May act as a fidelity factor of the translation reaction, by catalyzing a one-codon backward translocation of tRNAs on improperly translocated ribosomes. Back-translocation proceeds from a post-translocation (POST) complex to a pre-translocation (PRE) complex, thus giving elongation factor G a second chance to translocate the tRNAs correctly. Binds to ribosomes in a GTP-dependent manner. The chain is Elongation factor 4 from Cereibacter sphaeroides (strain ATCC 17023 / DSM 158 / JCM 6121 / CCUG 31486 / LMG 2827 / NBRC 12203 / NCIMB 8253 / ATH 2.4.1.) (Rhodobacter sphaeroides).